Consider the following 317-residue polypeptide: Neurogenic differentiation factor 6-B (317 aa).

Disordered stretches follow at residues 1-90 and 297-317; these read MLTV…ERSR and DLHP…GYHN. Residues 37-56 are compositionally biased toward acidic residues; it reads EAEDDNTDREEEEEREEDEN. Basic residues predominate over residues 59-69; it reads PKKKGPRKKKS. The Nuclear localization signal motif lies at 65-70; that stretch reads RKKKSE. Residues 70 to 90 are compositionally biased toward basic and acidic residues; the sequence is EGRGDRVKMRRQEANARERSR. The region spanning 78-130 is the bHLH domain; sequence MRRQEANARERSRMHGLNDALESLRKVVPCYSKTQKLSKIETLRLAKNYIWAL. The span at 301–317 shows a compositional bias: polar residues; sequence RSQSFQSQDELNTGYHN.

As to quaternary structure, efficient DNA binding requires dimerization with another bHLH protein. In terms of tissue distribution, embryonic olfactory bulbs and olfactory placodes. In adult, expressed in brain and eye.

It is found in the nucleus. Its function is as follows. Differentiation factor required for neurogenesis. Does not act as an upstream activator of isl1. The chain is Neurogenic differentiation factor 6-B from Danio rerio (Zebrafish).